Here is a 436-residue protein sequence, read N- to C-terminus: AMSH-like protease (436 aa).

Met1 carries the N-acetylmethionine modification. Phosphoserine is present on residues Ser25 and Ser242. Positions 269-397 (VVLSRDLCHK…IFRLTNAGML (129 aa)) constitute an MPN domain. Positions 347, 349, 360, 362, 402, 408, and 410 each coordinate Zn(2+). The JAMM motif motif lies at 347–360 (HTHPTQTAFLSSVD).

The protein belongs to the peptidase M67C family. Zn(2+) is required as a cofactor. As to expression, ubiquitously expressed. Isoform 1 is widely expressed while isoform 2 is testis-specific.

In terms of biological role, zinc metalloprotease that specifically cleaves 'Lys-63'-linked polyubiquitin chains. Acts as a positive regulator of the TORC1 signaling pathway by mediating 'Lys-63'-linked deubiquitination of SESN2, thereby inhibiting SESN2-interaction with the GATOR2 complex. Does not cleave 'Lys-48'-linked polyubiquitin chains. This is AMSH-like protease (Stambpl1) from Mus musculus (Mouse).